The chain runs to 148 residues: Large ribosomal subunit protein bL9 (148 aa).

Belongs to the bacterial ribosomal protein bL9 family.

Binds to the 23S rRNA. In Acetivibrio thermocellus (strain ATCC 27405 / DSM 1237 / JCM 9322 / NBRC 103400 / NCIMB 10682 / NRRL B-4536 / VPI 7372) (Clostridium thermocellum), this protein is Large ribosomal subunit protein bL9.